The sequence spans 302 residues: Sulfate adenylyltransferase subunit 2 (302 aa).

The protein belongs to the PAPS reductase family. CysD subfamily. In terms of assembly, heterodimer composed of CysD, the smaller subunit, and CysN.

It catalyses the reaction sulfate + ATP + H(+) = adenosine 5'-phosphosulfate + diphosphate. It participates in sulfur metabolism; hydrogen sulfide biosynthesis; sulfite from sulfate: step 1/3. In terms of biological role, with CysN forms the ATP sulfurylase (ATPS) that catalyzes the adenylation of sulfate producing adenosine 5'-phosphosulfate (APS) and diphosphate, the first enzymatic step in sulfur assimilation pathway. APS synthesis involves the formation of a high-energy phosphoric-sulfuric acid anhydride bond driven by GTP hydrolysis by CysN coupled to ATP hydrolysis by CysD. This Salmonella arizonae (strain ATCC BAA-731 / CDC346-86 / RSK2980) protein is Sulfate adenylyltransferase subunit 2.